Here is a 344-residue protein sequence, read N- to C-terminus: Probable dual-specificity RNA methyltransferase RlmN (344 aa).

Glutamate 89 functions as the Proton acceptor in the catalytic mechanism. The 235-residue stretch at 95–329 (TDQRLTVCVS…VSLRASRGLD (235 aa)) folds into the Radical SAM core domain. Cysteine 102 and cysteine 334 form a disulfide bridge. 3 residues coordinate [4Fe-4S] cluster: cysteine 109, cysteine 113, and cysteine 116. S-adenosyl-L-methionine is bound by residues 156-157 (GE), serine 186, 215-217 (SLH), and asparagine 291. Residue cysteine 334 is the S-methylcysteine intermediate of the active site.

Belongs to the radical SAM superfamily. RlmN family. [4Fe-4S] cluster serves as cofactor.

The protein localises to the cytoplasm. The enzyme catalyses adenosine(2503) in 23S rRNA + 2 reduced [2Fe-2S]-[ferredoxin] + 2 S-adenosyl-L-methionine = 2-methyladenosine(2503) in 23S rRNA + 5'-deoxyadenosine + L-methionine + 2 oxidized [2Fe-2S]-[ferredoxin] + S-adenosyl-L-homocysteine. The catalysed reaction is adenosine(37) in tRNA + 2 reduced [2Fe-2S]-[ferredoxin] + 2 S-adenosyl-L-methionine = 2-methyladenosine(37) in tRNA + 5'-deoxyadenosine + L-methionine + 2 oxidized [2Fe-2S]-[ferredoxin] + S-adenosyl-L-homocysteine. Functionally, specifically methylates position 2 of adenine 2503 in 23S rRNA and position 2 of adenine 37 in tRNAs. The protein is Probable dual-specificity RNA methyltransferase RlmN of Parasynechococcus marenigrum (strain WH8102).